The primary structure comprises 353 residues: uncharacterized protein (353 aa).

This is an uncharacterized protein from Archaeoglobus fulgidus (strain ATCC 49558 / DSM 4304 / JCM 9628 / NBRC 100126 / VC-16).